Reading from the N-terminus, the 146-residue chain is ATP synthase epsilon chain (146 aa).

It belongs to the ATPase epsilon chain family. In terms of assembly, F-type ATPases have 2 components, CF(1) - the catalytic core - and CF(0) - the membrane proton channel. CF(1) has five subunits: alpha(3), beta(3), gamma(1), delta(1), epsilon(1). CF(0) has three main subunits: a, b and c.

Its subcellular location is the cell membrane. Its function is as follows. Produces ATP from ADP in the presence of a proton gradient across the membrane. The protein is ATP synthase epsilon chain of Lactobacillus helveticus (strain DPC 4571).